The following is a 44-amino-acid chain: Protein PsbN (44 aa).

The chain crosses the membrane as a helical span at residues 6–26 (FFFTIFLWFFLLSITAYSIYV).

Belongs to the PsbN family.

The protein localises to the plastid. Its subcellular location is the chloroplast thylakoid membrane. May play a role in photosystem I and II biogenesis. This chain is Protein PsbN, found in Stigeoclonium helveticum (Green alga).